The sequence spans 473 residues: Photosystem II CP43 reaction center protein (473 aa).

A propeptide spanning residues 1–14 (MKTLYSLRRFYPVE) is cleaved from the precursor. N-acetylthreonine is present on Thr15. Residue Thr15 is modified to Phosphothreonine. 5 helical membrane-spanning segments follow: residues 69 to 93 (LFEV…PHLA), 134 to 155 (LLGP…KDRN), 178 to 200 (KALY…RKIT), 255 to 275 (KPFA…LSYS), and 291 to 312 (WFNN…ASQA). Glu367 lines the [CaMn4O5] cluster pocket. Residues 447–471 (RARAAAAGFEKGIDRDFEPVLSMTP) traverse the membrane as a helical segment.

This sequence belongs to the PsbB/PsbC family. PsbC subfamily. PSII is composed of 1 copy each of membrane proteins PsbA, PsbB, PsbC, PsbD, PsbE, PsbF, PsbH, PsbI, PsbJ, PsbK, PsbL, PsbM, PsbT, PsbX, PsbY, PsbZ, Psb30/Ycf12, at least 3 peripheral proteins of the oxygen-evolving complex and a large number of cofactors. It forms dimeric complexes. The cofactor is Binds multiple chlorophylls and provides some of the ligands for the Ca-4Mn-5O cluster of the oxygen-evolving complex. It may also provide a ligand for a Cl- that is required for oxygen evolution. PSII binds additional chlorophylls, carotenoids and specific lipids..

It localises to the plastid. The protein resides in the chloroplast thylakoid membrane. One of the components of the core complex of photosystem II (PSII). It binds chlorophyll and helps catalyze the primary light-induced photochemical processes of PSII. PSII is a light-driven water:plastoquinone oxidoreductase, using light energy to abstract electrons from H(2)O, generating O(2) and a proton gradient subsequently used for ATP formation. This is Photosystem II CP43 reaction center protein from Gossypium hirsutum (Upland cotton).